We begin with the raw amino-acid sequence, 343 residues long: Heat-inducible transcription repressor HrcA (343 aa).

It belongs to the HrcA family.

In terms of biological role, negative regulator of class I heat shock genes (grpE-dnaK-dnaJ and groELS operons). Prevents heat-shock induction of these operons. The sequence is that of Heat-inducible transcription repressor HrcA from Bacillus subtilis (strain 168).